The primary structure comprises 915 residues: WD repeat-containing protein 44 (915 aa).

The segment covering Met1–Pro14 has biased composition (acidic residues). The segment at Met1 to Pro24 is disordered. N-acetylalanine is present on Ala2. Positions Ala2–Gly173 are binding activity. Phosphoserine is present on Ser3. The short motif at Glu9 to Glu15 is the FFAT-like motif element. Tyr11 carries the post-translational modification Phosphotyrosine. 6 positions are modified to phosphoserine: Ser27, Ser50, Ser66, Ser71, Ser81, and Ser126. Disordered regions lie at residues Asp79 to Thr102, Leu117 to Leu174, and Val208 to Asn282. The stretch at Glu114 to Lys139 forms a coiled coil. Over residues Thr146–Asp155 the composition is skewed to basic and acidic residues. Thr161 and Thr221 each carry phosphothreonine. Positions Pro213–Pro259 are important for interaction with ARHGAP26 AND ARHGAP10. The segment covering Pro235–Pro258 has biased composition (pro residues). Residue Ser264 is modified to Phosphoserine. Over residues Ser264 to Lys280 the composition is skewed to basic and acidic residues. At Thr273 the chain carries Phosphothreonine. The segment at Val336 to Glu349 is important for interaction with RAB11A. Phosphoserine is present on residues Ser344 and Ser346. Phosphothreonine is present on residues Thr351 and Thr403. Disordered stretches follow at residues Ser399–Gln425 and Asp461–Tyr481. Residues Ser405, Ser472, Ser473, and Ser474 each carry the phosphoserine modification. Residues Asp469–Gly478 show a composition bias toward acidic residues. Tyr481 carries the phosphotyrosine modification. Residues Glu511–Asn550 form a WD 1 repeat. Residues Glu559–Lys593 form a disordered region. Phosphoserine occurs at positions 563 and 567. Positions Ser563–Lys575 are enriched in low complexity. WD repeat units follow at residues Gly607–Cys645, Gln647–Trp687, Gly692–Gln731, Lys742–Lys781, Val786–Thr825, Ala840–Asp880, and Thr882–Ser915.

As to quaternary structure, interacts with the GTP-bound form of RAB11 when membrane-associated. Interacts with GRAF1/ARHGAP26 or GRAF2/ARHGAP10; the interaction connects the endoplasmic reticulum (ER) with the endosomal tubule. Interacts (via FFAT-like motif) with VAPA (via MSP domain) or VAPB (via MSP domain); the interaction connects the ER with the endosomal tubule. Does not bind to other Rab and Rho small G proteins. In terms of processing, phosphorylated by ATK1; the phosphorylation stabilizes its interaction with RAB11A and RAB11B.

Its subcellular location is the cytoplasm. It is found in the cytosol. The protein resides in the perinuclear region. The protein localises to the endosome membrane. It localises to the golgi apparatus. Its subcellular location is the trans-Golgi network. Functionally, downstream effector for Rab11 which regulates Rab11 intracellular membrane trafficking functions such as endocytic recycling, intracellular ciliogenesis and protein export. ATK1-mediated phosphorylation of WDR44 induces binding to Rab11 which activates endocytic recycling of transferrin receptor back to the plasma membrane. When bound to Rab11, prevents the formation of the ciliogenic Rab11-Rabin8/RAB3IP-RAB11FIP3 complex, therefore inhibiting preciliary trafficking and ciliogenesis. Participates in neo-synthesized protein export by connecting the endoplasmic reticulum (ER) with the endosomal tubule via direct interactions with the integral ER proteins VAPA or VAPB and the endosomal protein GRAFs (GRAF1/ARHGAP26 or GRAF2/ARHGAP10), which facilitates the transfer of proteins such as E-cadherin, MPP14 and CFTR into a Rab8-Rab10-Rab11-dependent export route. This Mus musculus (Mouse) protein is WD repeat-containing protein 44.